The sequence spans 23 residues: Potassium channel toxin alpha-KTx 13.3 (23 aa).

3 cysteine pairs are disulfide-bonded: Cys2/Cys15, Cys5/Cys20, and Cys9/Cys22. Residues 13–20 (GKCINGRC) form an interaction with Ca(2+)-activated K(+) channels region. Tyr23 is modified (tyrosine amide).

In terms of tissue distribution, expressed by the venom gland.

Its subcellular location is the secreted. In terms of biological role, reversibly blocks Shaker B potassium channels, with a dissociation constant of 200 nM. The polypeptide is Potassium channel toxin alpha-KTx 13.3 (Tityus pachyurus (Colombian scorpion)).